Consider the following 577-residue polypeptide: Arginine--tRNA ligase (577 aa).

Positions 122–132 (PNVAKEMHVGH) match the 'HIGH' region motif.

It belongs to the class-I aminoacyl-tRNA synthetase family. In terms of assembly, monomer.

The protein resides in the cytoplasm. The enzyme catalyses tRNA(Arg) + L-arginine + ATP = L-arginyl-tRNA(Arg) + AMP + diphosphate. The chain is Arginine--tRNA ligase from Klebsiella pneumoniae (strain 342).